The primary structure comprises 177 residues: Large ribosomal subunit protein uL6 (177 aa).

This sequence belongs to the universal ribosomal protein uL6 family. As to quaternary structure, part of the 50S ribosomal subunit.

This protein binds to the 23S rRNA, and is important in its secondary structure. It is located near the subunit interface in the base of the L7/L12 stalk, and near the tRNA binding site of the peptidyltransferase center. This Ralstonia pickettii (strain 12J) protein is Large ribosomal subunit protein uL6.